Consider the following 447-residue polypeptide: Cytochrome P450 BJ-4 homolog (447 aa).

Cys-392 is a binding site for heme.

The protein belongs to the cytochrome P450 family. Requires heme as cofactor.

Its function is as follows. Cytochromes P450 are a group of heme-thiolate monooxygenases. They oxidize a variety of structurally unrelated compounds, including steroids, fatty acids, and xenobiotics. The protein is Cytochrome P450 BJ-4 homolog (cyp117A2) of Sinorhizobium fredii (strain NBRC 101917 / NGR234).